We begin with the raw amino-acid sequence, 242 residues long: UDP-2,3-diacylglucosamine hydrolase (242 aa).

The Mn(2+) site is built by Asp8, His10, Asp41, Asn79, and His114. 79 to 80 is a binding site for substrate; that stretch reads NR. Positions 122, 164, 167, and 195 each coordinate substrate. Positions 195 and 197 each coordinate Mn(2+).

Belongs to the LpxH family. The cofactor is Mn(2+).

It localises to the cell inner membrane. The catalysed reaction is UDP-2-N,3-O-bis[(3R)-3-hydroxytetradecanoyl]-alpha-D-glucosamine + H2O = 2-N,3-O-bis[(3R)-3-hydroxytetradecanoyl]-alpha-D-glucosaminyl 1-phosphate + UMP + 2 H(+). Its pathway is glycolipid biosynthesis; lipid IV(A) biosynthesis; lipid IV(A) from (3R)-3-hydroxytetradecanoyl-[acyl-carrier-protein] and UDP-N-acetyl-alpha-D-glucosamine: step 4/6. Functionally, hydrolyzes the pyrophosphate bond of UDP-2,3-diacylglucosamine to yield 2,3-diacylglucosamine 1-phosphate (lipid X) and UMP by catalyzing the attack of water at the alpha-P atom. Involved in the biosynthesis of lipid A, a phosphorylated glycolipid that anchors the lipopolysaccharide to the outer membrane of the cell. In Vibrio parahaemolyticus serotype O3:K6 (strain RIMD 2210633), this protein is UDP-2,3-diacylglucosamine hydrolase.